The sequence spans 293 residues: MALRLDGKALAKELEQRLAQQVRSGCAKAGRPPGLAVLRVGDDPASAVYVANKEKACARVGVESFGAHLPASSQPETLLKTIQALNADERVDGILLQLPLPAGLDETPLLAAIDPDKDADGLHTLNLGRLLKGEPGPRSCTPAGVMAMLRSQGIDPSGKRAVVVGRSILVGQPMALMLQAANATVMVAHSRTRDLAALTRQADILVVAAGRPEMIGAEHVAPGAVVVDVGIHRRPEGGLCGDVNAAELEPLAAALSPVPGGVGPMTVTMLLVNTVLAWSRRHQLDHDLADLVP.

NADP(+) contacts are provided by residues 165-167 (GRS), serine 190, and isoleucine 231.

Belongs to the tetrahydrofolate dehydrogenase/cyclohydrolase family. As to quaternary structure, homodimer.

The enzyme catalyses (6R)-5,10-methylene-5,6,7,8-tetrahydrofolate + NADP(+) = (6R)-5,10-methenyltetrahydrofolate + NADPH. The catalysed reaction is (6R)-5,10-methenyltetrahydrofolate + H2O = (6R)-10-formyltetrahydrofolate + H(+). Its pathway is one-carbon metabolism; tetrahydrofolate interconversion. Catalyzes the oxidation of 5,10-methylenetetrahydrofolate to 5,10-methenyltetrahydrofolate and then the hydrolysis of 5,10-methenyltetrahydrofolate to 10-formyltetrahydrofolate. In Synechococcus sp. (strain WH7803), this protein is Bifunctional protein FolD.